Consider the following 176-residue polypeptide: Ribosome maturation factor RimM (176 aa).

The PRC barrel domain occupies 99–173 (KEGEFHLVDL…WLLIKPPPGL (75 aa)).

This sequence belongs to the RimM family. As to quaternary structure, binds ribosomal protein uS19.

It is found in the cytoplasm. Functionally, an accessory protein needed during the final step in the assembly of 30S ribosomal subunit, possibly for assembly of the head region. Essential for efficient processing of 16S rRNA. May be needed both before and after RbfA during the maturation of 16S rRNA. It has affinity for free ribosomal 30S subunits but not for 70S ribosomes. This is Ribosome maturation factor RimM from Prochlorococcus marinus (strain MIT 9211).